Here is a 341-residue protein sequence, read N- to C-terminus: Ketol-acid reductoisomerase (NADP(+)) (341 aa).

One can recognise a KARI N-terminal Rossmann domain in the interval 3–184; the sequence is LKVYYDKDCD…GGGRSGIIET (182 aa). NADP(+) is bound by residues 26-29, Ser-54, and 84-87; these read FGSQ and DELQ. Residue His-109 is part of the active site. Position 135 (Gly-135) interacts with NADP(+). Positions 185–330 constitute a KARI C-terminal knotted domain; it reads TFKDETETDL…GRLRAMMPWI (146 aa). Mg(2+) is bound by residues Asp-193, Glu-197, Glu-229, and Glu-233. Ser-254 contributes to the substrate binding site.

The protein belongs to the ketol-acid reductoisomerase family. Mg(2+) is required as a cofactor.

It catalyses the reaction (2R)-2,3-dihydroxy-3-methylbutanoate + NADP(+) = (2S)-2-acetolactate + NADPH + H(+). It carries out the reaction (2R,3R)-2,3-dihydroxy-3-methylpentanoate + NADP(+) = (S)-2-ethyl-2-hydroxy-3-oxobutanoate + NADPH + H(+). The protein operates within amino-acid biosynthesis; L-isoleucine biosynthesis; L-isoleucine from 2-oxobutanoate: step 2/4. Its pathway is amino-acid biosynthesis; L-valine biosynthesis; L-valine from pyruvate: step 2/4. Its function is as follows. Involved in the biosynthesis of branched-chain amino acids (BCAA). Catalyzes an alkyl-migration followed by a ketol-acid reduction of (S)-2-acetolactate (S2AL) to yield (R)-2,3-dihydroxy-isovalerate. In the isomerase reaction, S2AL is rearranged via a Mg-dependent methyl migration to produce 3-hydroxy-3-methyl-2-ketobutyrate (HMKB). In the reductase reaction, this 2-ketoacid undergoes a metal-dependent reduction by NADPH to yield (R)-2,3-dihydroxy-isovalerate. The sequence is that of Ketol-acid reductoisomerase (NADP(+)) from Helicobacter hepaticus (strain ATCC 51449 / 3B1).